The following is a 432-amino-acid chain: MTQLEAAQVGQVTRAMEQVAAREKVRVEDLMAEVAAGRVVIPVNKNHHKLQPCGIGRGLRTKVNANLGTSTDYPDIAAELEKLQVALDAGADAVMDLSTGGDINECRRQVIARSPATVGTVPIYQATVEAQEKYGALVKMTVDDLFRVIEMQAEDGVDFITVHCGVTMEVVERLRREGRLADIVSRGGSFLTGWMLHNEQENPLYAHYDRLLEIARRYDVTLSLGDGLRPGCLADATDRAQIQELIILGELVDRAREAGVQAMVEGPGHVPLNQIQANILLEKRLCHEAPFYVLGPLVTDVAPGYDHLTAAIGGALAAAAGADFICYVTPAEHLGLPTLADVREGVIAARIAGHAADLAKGLPGAWEWDREMARARKALDWQRQIELALDPEKARQYRRARNDEGAVACSMCGDFCAMRLVGEYLGKPSETC.

Substrate is bound by residues Asn66, Met95, Tyr124, His163, 185–187 (SRG), 226–229 (DGLR), and Glu265. Residue His269 participates in Zn(2+) binding. Tyr292 contacts substrate. His333 lines the Zn(2+) pocket. [4Fe-4S] cluster is bound by residues Cys409, Cys412, and Cys416.

Belongs to the ThiC family. [4Fe-4S] cluster serves as cofactor.

The catalysed reaction is 5-amino-1-(5-phospho-beta-D-ribosyl)imidazole + S-adenosyl-L-methionine = 4-amino-2-methyl-5-(phosphooxymethyl)pyrimidine + CO + 5'-deoxyadenosine + formate + L-methionine + 3 H(+). It participates in cofactor biosynthesis; thiamine diphosphate biosynthesis. Its function is as follows. Catalyzes the synthesis of the hydroxymethylpyrimidine phosphate (HMP-P) moiety of thiamine from aminoimidazole ribotide (AIR) in a radical S-adenosyl-L-methionine (SAM)-dependent reaction. The chain is Phosphomethylpyrimidine synthase from Moorella thermoacetica (strain ATCC 39073 / JCM 9320).